Consider the following 1061-residue polypeptide: Error-prone DNA polymerase (1061 aa).

Belongs to the DNA polymerase type-C family. DnaE2 subfamily.

Its subcellular location is the cytoplasm. The catalysed reaction is DNA(n) + a 2'-deoxyribonucleoside 5'-triphosphate = DNA(n+1) + diphosphate. DNA polymerase involved in damage-induced mutagenesis and translesion synthesis (TLS). It is not the major replicative DNA polymerase. The polypeptide is Error-prone DNA polymerase (Bdellovibrio bacteriovorus (strain ATCC 15356 / DSM 50701 / NCIMB 9529 / HD100)).